The chain runs to 118 residues: Large ribosomal subunit protein bL19 (118 aa).

It belongs to the bacterial ribosomal protein bL19 family.

In terms of biological role, this protein is located at the 30S-50S ribosomal subunit interface and may play a role in the structure and function of the aminoacyl-tRNA binding site. The sequence is that of Large ribosomal subunit protein bL19 from Geobacter metallireducens (strain ATCC 53774 / DSM 7210 / GS-15).